Reading from the N-terminus, the 94-residue chain is Co-chaperonin GroES (94 aa).

This sequence belongs to the GroES chaperonin family. In terms of assembly, heptamer of 7 subunits arranged in a ring. Interacts with the chaperonin GroEL.

Its subcellular location is the cytoplasm. Its function is as follows. Together with the chaperonin GroEL, plays an essential role in assisting protein folding. The GroEL-GroES system forms a nano-cage that allows encapsulation of the non-native substrate proteins and provides a physical environment optimized to promote and accelerate protein folding. GroES binds to the apical surface of the GroEL ring, thereby capping the opening of the GroEL channel. This chain is Co-chaperonin GroES, found in Bacillus cytotoxicus (strain DSM 22905 / CIP 110041 / 391-98 / NVH 391-98).